We begin with the raw amino-acid sequence, 321 residues long: MPFITEIKTFAALGSGVIGSGWVARALAHGLDVVAWDPAPGAEQALRKRVANAWPALEKQGLAPGASQDRLKFVATIEECVRNADFIQESAPERLDLKLDLHAKISAAAKPDAIIGSSTSGLLPSEFYESSTHPERCVVGHPFNPVYLLPLVEIVGGSRTSPEAIEAAKTIYTALGMRPLHVRKEVPGFIADRLLEALWREALHLVNDGVATTGEIDDAIRFGAGLRWSFMGTFLTYTLAGGDAGMRHFMSQFGPALKLPWTYLPAPELTDKLIDDVVSGTSEQQGERSIAALERYRDDTLLAVLEAVKSSKASHGLSFSD.

Residue 14-19 (GSGVIG) coordinates NAD(+).

It belongs to the 3-hydroxyacyl-CoA dehydrogenase family. L-carnitine dehydrogenase subfamily. As to quaternary structure, homodimer.

It localises to the cytoplasm. It catalyses the reaction carnitine + NAD(+) = 3-dehydrocarnitine + NADH + H(+). Its pathway is amine and polyamine metabolism; carnitine metabolism. Catalyzes the NAD(+)-dependent oxidation of L-carnitine to 3-dehydrocarnitine. In Pseudomonas putida (strain ATCC 47054 / DSM 6125 / CFBP 8728 / NCIMB 11950 / KT2440), this protein is L-carnitine dehydrogenase.